The following is a 469-amino-acid chain: UDP-N-acetylmuramate--L-alanine ligase (469 aa).

114 to 120 (GTHGKTT) lines the ATP pocket.

The protein belongs to the MurCDEF family.

It is found in the cytoplasm. The enzyme catalyses UDP-N-acetyl-alpha-D-muramate + L-alanine + ATP = UDP-N-acetyl-alpha-D-muramoyl-L-alanine + ADP + phosphate + H(+). It participates in cell wall biogenesis; peptidoglycan biosynthesis. Its function is as follows. Cell wall formation. The sequence is that of UDP-N-acetylmuramate--L-alanine ligase from Sinorhizobium fredii (strain NBRC 101917 / NGR234).